A 201-amino-acid polypeptide reads, in one-letter code: Large ribosomal subunit protein uL4 (201 aa).

Residues 45 to 71 (AQKTRAEVTGSGKKPWRQKGTGRARAG) are disordered.

It belongs to the universal ribosomal protein uL4 family. As to quaternary structure, part of the 50S ribosomal subunit.

In terms of biological role, one of the primary rRNA binding proteins, this protein initially binds near the 5'-end of the 23S rRNA. It is important during the early stages of 50S assembly. It makes multiple contacts with different domains of the 23S rRNA in the assembled 50S subunit and ribosome. Its function is as follows. Forms part of the polypeptide exit tunnel. This is Large ribosomal subunit protein uL4 from Shewanella sp. (strain MR-4).